Consider the following 178-residue polypeptide: Beta-lytic metalloendopeptidase (178 aa).

C65 and C111 are joined by a disulfide. Zn(2+) is bound by residues H120 and H122. Cysteines 155 and 168 form a disulfide.

It belongs to the peptidase M23A family. Requires Zn(2+) as cofactor.

It carries out the reaction Cleavage of N-acetylmuramoyl-|-Ala, and of the insulin B chain at 23-Gly-|-Phe-24 &gt; 18-Val-|-Cys(SO3H).. This chain is Beta-lytic metalloendopeptidase, found in Lysobacter enzymogenes.